The sequence spans 421 residues: Alpha-tubulin N-acetyltransferase 1 (421 aa).

The region spanning 1–190 is the N-acetyltransferase domain; the sequence is MEFPFDVDAL…NNFVIFEGFF (190 aa). An N6-acetyllysine; by autocatalysis modification is found at K56. 124–137 is a binding site for acetyl-CoA; sequence FYIHESVQRHGHGR. An N6-acetyllysine; by autocatalysis modification is found at K146. Acetyl-CoA is bound at residue 160-169; it reads SPKLLKFLNK. The segment at 214 to 235 is disordered; it reads PIPAAPARKLPPKRAEGDIKPY. Residues 226-235 are compositionally biased toward basic and acidic residues; the sequence is KRAEGDIKPY. N6-acetyllysine; by autocatalysis is present on residues K233 and K244. A disordered region spans residues 252-284; that stretch reads PLNRAPRRATPPAHPPPRSSSLGNSPDRGPLRP. 2 positions are modified to phosphoserine: S272 and S276. R305 carries the asymmetric dimethylarginine modification. Phosphoserine is present on S315. Omega-N-methylarginine is present on R323. A compositionally biased stretch (polar residues) spans 342 to 351; it reads FNTSFLGTGN. Positions 342-398 are disordered; the sequence is FNTSFLGTGNQERKQGEQEAEDRSASEDQVLLQDGSGEEPTHTVAPRAQAPPAQSWM. The span at 352-367 shows a compositional bias: basic and acidic residues; that stretch reads QERKQGEQEAEDRSAS.

It belongs to the acetyltransferase ATAT1 family. In terms of assembly, component of the BBSome complex. Interacts with AP2 alpha-adaptins, including AP2A2, but not with AP1 gamma-adaptin (AP1G1/AP1G2); this interaction is required for efficient alpha-tubulin acetylation, hence clathrin-coated pits are sites of microtubule acetylation. Post-translationally, autoacetylation strongly increases tubulin acetylation.

It localises to the cytoplasm. The protein localises to the membrane. Its subcellular location is the clathrin-coated pit. The protein resides in the cell junction. It is found in the focal adhesion. It localises to the cell projection. The protein localises to the axon. Its subcellular location is the cytoskeleton. The protein resides in the spindle. The catalysed reaction is L-lysyl-[alpha-tubulin] + acetyl-CoA = N(6)-acetyl-L-lysyl-[alpha-tubulin] + CoA + H(+). Functionally, specifically acetylates 'Lys-40' in alpha-tubulin on the lumenal side of microtubules. Promotes microtubule destabilization and accelerates microtubule dynamics; this activity may be independent of acetylation activity. Acetylates alpha-tubulin with a slow enzymatic rate, due to a catalytic site that is not optimized for acetyl transfer. Enters the microtubule through each end and diffuses quickly throughout the lumen of microtubules. Acetylates only long/old microtubules because of its slow acetylation rate since it does not have time to act on dynamically unstable microtubules before the enzyme is released. Required for normal sperm flagellar function. Promotes directional cell locomotion and chemotaxis, through AP2A2-dependent acetylation of alpha-tubulin at clathrin-coated pits that are concentrated at the leading edge of migrating cells. May facilitate primary cilium assembly. The protein is Alpha-tubulin N-acetyltransferase 1 of Rattus norvegicus (Rat).